The sequence spans 345 residues: Anthranilate phosphoribosyltransferase (345 aa).

Residues Gly-88, 91–92, Thr-96, 98–101, 116–124, and Ser-128 contribute to the 5-phospho-alpha-D-ribose 1-diphosphate site; these read GD, NIST, and KHGNRSASG. Gly-88 lines the anthranilate pocket. Mg(2+) is bound at residue Ser-100. Asn-119 is an anthranilate binding site. Position 174 (Arg-174) interacts with anthranilate. Mg(2+) contacts are provided by Asp-233 and Glu-234.

The protein belongs to the anthranilate phosphoribosyltransferase family. As to quaternary structure, homodimer. It depends on Mg(2+) as a cofactor.

The catalysed reaction is N-(5-phospho-beta-D-ribosyl)anthranilate + diphosphate = 5-phospho-alpha-D-ribose 1-diphosphate + anthranilate. It functions in the pathway amino-acid biosynthesis; L-tryptophan biosynthesis; L-tryptophan from chorismate: step 2/5. Catalyzes the transfer of the phosphoribosyl group of 5-phosphorylribose-1-pyrophosphate (PRPP) to anthranilate to yield N-(5'-phosphoribosyl)-anthranilate (PRA). The chain is Anthranilate phosphoribosyltransferase from Prochlorococcus marinus (strain NATL2A).